Consider the following 399-residue polypeptide: MRKNLTKLTRVKRETKMGRATRWFKGLFGIKPSSCSGTDSGTISNRLDRSLCDSYETIPPNISEKEAAWLRSFYAAGEEEKERRTHAIAVAAATAAAADAAVAAAKAAAAVVRLQGQGKSGPLGGGKSREHRAAMQIQCAFRGYLARKALRALRGVVKIQALVRGFLVRNQAAATLRSMEALVRAQKTVKIQRALRRNGNAAPARKSTERFSGSLENRNNGEETAKIVEVDTGTRPGTYRIRAPVLSGSDFLDNPFRRTLSSPLSGRVPPRLSMPKPEWEECSSKFPTAQSTPRFSGGSPARSVCCSGGGVEAEVDTEADANRFCFLSGEFNSGYMADTTSFRAKLRSHSAPRQRPESNASAGGWRRSIGGGGVRMQRQSCSGVREAVVGNIERRRMRW.

Positions 1 to 8 (MRKNLTKL) match the Nuclear localization signal motif. Calmodulin-binding stretches follow at residues 81–91 (KERRTHAIAVA) and 99–110 (DAAVAAAKAAAA). IQ domains follow at residues 130–158 (EHRAAMQIQCAFRGYLARKALRALRGVVK) and 159–181 (IQALVRGFLVRNQAAATLRSMEA). 3 disordered regions span residues 198–219 (NGNAAPARKSTERFSGSLENRN), 262–302 (SPLS…SPAR), and 346–377 (LRSHSAPRQRPESNASAGGWRRSIGGGGVRMQ). A compositionally biased stretch (polar residues) spans 285-294 (KFPTAQSTPR).

It belongs to the IQD family. Binds to multiple calmodulin (CaM) in the presence of Ca(2+) and CaM-like proteins.

It is found in the nucleus. The protein localises to the cell membrane. May be involved in cooperative interactions with calmodulins or calmodulin-like proteins. Recruits calmodulin proteins to microtubules, thus being a potential scaffold in cellular signaling and trafficking. May associate with nucleic acids and regulate gene expression at the transcriptional or post-transcriptional level. The chain is Protein IQ-DOMAIN 25 from Arabidopsis thaliana (Mouse-ear cress).